Reading from the N-terminus, the 521-residue chain is SET and MYND domain-containing protein DDB_G0292140 (521 aa).

Positions 1-101 (MDGVIESPSN…KIKKSKKSIK (101 aa)) are disordered. A compositionally biased stretch (low complexity) spans 12–55 (TIKISPSTSDSSTTTPIITTPPTQSTATVTTKAAATTTTTEAST). Residues 56-65 (TPPPPQPTPT) show a composition bias toward pro residues. Low complexity predominate over residues 66–90 (PTQSTATVTKEVETTTETIPPIVTK). Residues 91-101 (GKIKKSKKSIK) are compositionally biased toward basic residues. The 285-residue stretch at 122–406 (WPIHVYSHPI…EGDELTISYI (285 aa)) folds into the SET domain. C167, C170, C188, C191, C197, C201, H209, and C213 together coordinate Zn(2+). An MYND-type zinc finger spans residues 167-213 (CQHCFLEVPLNQQILPTDFYMCEGCQRVGYCSANCRCIDYSQHRFEC). Residues 442 to 521 (QTGTLEKDDD…QDHQNNDKSN (80 aa)) form a disordered region. Residues 448-469 (KDDDDNDDEKEKMDEDDDEKDD) show a composition bias toward acidic residues. The segment covering 470–485 (DINNKNDKKSKYKSDG) has biased composition (basic and acidic residues). Acidic residues predominate over residues 486-495 (STDDEEDEDN). The span at 497 to 514 (NNKNNNKNKNNNSNNQDH) shows a compositional bias: low complexity.

The protein belongs to the class V-like SAM-binding methyltransferase superfamily.

In terms of biological role, probable methyltransferase. The protein is SET and MYND domain-containing protein DDB_G0292140 of Dictyostelium discoideum (Social amoeba).